Consider the following 215-residue polypeptide: MASATLPAWIKMPSFLKKILKLRGRRQEDESRSRMLSDSSTQSYQVNQLTSEETEAGSTIPSTPSKGQALPTEPKVRAREKSRHRRPKIIDQVRRVESLGEQASQRQKHMLETLINKIYTGPLGEELVQTLYLRIWAMEETPESLKILQMREDIRDQVLKMKTERWLRTLIRGEKTKLKDFQKRYEEVHPYLMKEKVEQIIMEEAWSLAAHIVQE.

Residues 12-34 (MPSFLKKILKLRGRRQEDESRSR) are disordered. Residues 15 to 22 (FLKKILKL) are involved in self-degradation and in host STAT1 degradation. Residues 25 to 35 (RRQEDESRSRM) are compositionally biased toward basic and acidic residues. The span at 36 to 66 (LSDSSTQSYQVNQLTSEETEAGSTIPSTPSK) shows a compositional bias: polar residues.

Belongs to the respirovirus protein C family. As to quaternary structure, the different isoforms interact (via C-terminus) with unphosphorylated and phosphorylated human STAT1 (via N-terminus), favoring the formation of parallel STAT1 homodimers. The different isoforms do not interact with host STAT2. C protein interacts with L protein; this interaction has an inhibitory effect on viral transcription and replication. In terms of processing, protein Y1 is produced not only by alternative initiation, but also by proteolytic cleavage of C'. Only alternative initiation is detected in vitro, whereas in vivo cleavage seems to be predominant.

It localises to the host cytoplasm. Functionally, the different products prevent the establishment of cellular antiviral state by blocking the interferon-alpha/beta (IFN-alpha/beta) and IFN-gamma signaling pathways. They inhibit IFN-alpha/beta induced tyrosine phosphorylation of STAT1 and STAT2. Blocking the IFN-alpha/beta pathway requires binding to STAT1 in the cytoplasm. They inhibit IFN-gamma induced serine phosphorylation of STAT1. Block the IFN-gamma pathway by binding to and stabilizing the parallel form of the STAT1 dimer, further inducing high-molecular-weight complex formation and inhibition of transcription by IFN-gamma. May also have a role in preventing the cell to enter apoptosis. Modulate regulation of viral transcription and replication. Overexpression inhibits the viral RNA polymerase. The absence of all C', C and Y1 proteins leads to viral delayed growth. Plays an important role in virion particles release. Modulates virion shape. This chain is Protein C' (P/V/C), found in Cavia cutleri (Guinea pig).